The following is a 449-amino-acid chain: D-inositol 3-phosphate glycosyltransferase (449 aa).

Histidine 43 contributes to the 1D-myo-inositol 3-phosphate binding site. Residues 49–50 and glycine 57 each bind UDP-N-acetyl-alpha-D-glucosamine; that span reads QP. 1D-myo-inositol 3-phosphate-binding positions include 54 to 59, lysine 112, tyrosine 145, threonine 169, and arginine 189; that span reads DAGGMN. The UDP-N-acetyl-alpha-D-glucosamine site is built by arginine 263, lysine 268, and glutamine 324. Mg(2+) contacts are provided by tyrosine 333, arginine 334, and alanine 336. UDP-N-acetyl-alpha-D-glucosamine is bound by residues glutamate 346 and glutamate 354. Threonine 360 is a Mg(2+) binding site.

It belongs to the glycosyltransferase group 1 family. MshA subfamily. As to quaternary structure, homodimer.

It catalyses the reaction 1D-myo-inositol 3-phosphate + UDP-N-acetyl-alpha-D-glucosamine = 1D-myo-inositol 2-acetamido-2-deoxy-alpha-D-glucopyranoside 3-phosphate + UDP + H(+). In terms of biological role, catalyzes the transfer of a N-acetyl-glucosamine moiety to 1D-myo-inositol 3-phosphate to produce 1D-myo-inositol 2-acetamido-2-deoxy-glucopyranoside 3-phosphate in the mycothiol biosynthesis pathway. This Segniliparus rotundus (strain ATCC BAA-972 / CDC 1076 / CIP 108378 / DSM 44985 / JCM 13578) protein is D-inositol 3-phosphate glycosyltransferase.